We begin with the raw amino-acid sequence, 332 residues long: Ketol-acid reductoisomerase (NADP(+)) (332 aa).

Residues 1 to 182 form the KARI N-terminal Rossmann domain; the sequence is MAVIYYDKDC…GSNRAGVLET (182 aa). Residues 25 to 28 and 83 to 86 each bind NADP(+); these read YGAQ and DTSQ. His-108 is an active-site residue. Gly-134 is an NADP(+) binding site. A KARI C-terminal knotted domain is found at 183 to 328; sequence TFAEETETDL…AELRSMMSWL (146 aa). Mg(2+) is bound by residues Asp-191, Glu-195, Glu-227, and Glu-231. Ser-252 lines the substrate pocket.

The protein belongs to the ketol-acid reductoisomerase family. The cofactor is Mg(2+).

The enzyme catalyses (2R)-2,3-dihydroxy-3-methylbutanoate + NADP(+) = (2S)-2-acetolactate + NADPH + H(+). It catalyses the reaction (2R,3R)-2,3-dihydroxy-3-methylpentanoate + NADP(+) = (S)-2-ethyl-2-hydroxy-3-oxobutanoate + NADPH + H(+). The protein operates within amino-acid biosynthesis; L-isoleucine biosynthesis; L-isoleucine from 2-oxobutanoate: step 2/4. It functions in the pathway amino-acid biosynthesis; L-valine biosynthesis; L-valine from pyruvate: step 2/4. In terms of biological role, involved in the biosynthesis of branched-chain amino acids (BCAA). Catalyzes an alkyl-migration followed by a ketol-acid reduction of (S)-2-acetolactate (S2AL) to yield (R)-2,3-dihydroxy-isovalerate. In the isomerase reaction, S2AL is rearranged via a Mg-dependent methyl migration to produce 3-hydroxy-3-methyl-2-ketobutyrate (HMKB). In the reductase reaction, this 2-ketoacid undergoes a metal-dependent reduction by NADPH to yield (R)-2,3-dihydroxy-isovalerate. The sequence is that of Ketol-acid reductoisomerase (NADP(+)) from Dehalococcoides mccartyi (strain ATCC BAA-2266 / KCTC 15142 / 195) (Dehalococcoides ethenogenes (strain 195)).